Here is a 274-residue protein sequence, read N- to C-terminus: Subtilisin DY (274 aa).

Gln2 contributes to the Ca(2+) binding site. Positions Pro5 to Ala273 constitute a Peptidase S8 domain. Asp32 functions as the Charge relay system in the catalytic mechanism. Asp41 is a Ca(2+) binding site. His63 (charge relay system) is an active-site residue. Ca(2+) contacts are provided by Leu74, Asn76, Val80, Ala168, Tyr170, and Val173. Ser220 serves as the catalytic Charge relay system.

Belongs to the peptidase S8 family. Ca(2+) is required as a cofactor.

Its subcellular location is the secreted. It catalyses the reaction Hydrolysis of proteins with broad specificity for peptide bonds, and a preference for a large uncharged residue in P1. Hydrolyzes peptide amides.. Subtilisin is an extracellular alkaline serine protease, it catalyzes the hydrolysis of proteins and peptide amides. This is Subtilisin DY (apr) from Bacillus licheniformis.